The chain runs to 359 residues: Golgi-resident adenosine 3',5'-bisphosphate 3'-phosphatase (359 aa).

Met1 bears the N-acetylmethionine mark. The Cytoplasmic segment spans residues 1 to 12 (MAPMGIRLSPLG). A helical membrane pass occupies residues 13–33 (VAVFCLLGLGVLYHLYSGFLA). Over 34 to 359 (GRFSLFGLGG…LPDLEKTGHK (326 aa)) the chain is Lumenal. The interval 86–106 (ESNVLHEKSKGKTREGAEDKM) is disordered. Asp110 (proton acceptor) is an active-site residue. Mg(2+) is bound by residues Glu133, Asp174, Leu176, and Asp177. Thr179 functions as the Proton acceptor in the catalytic mechanism. AMP is bound by residues Ser242 and His245. Asn259 is a glycosylation site (N-linked (GlcNAc...) asparagine). AMP contacts are provided by Gly268 and Lys272. Asp300 is a binding site for Mg(2+).

Belongs to the inositol monophosphatase superfamily. The cofactor is Mg(2+). Post-translationally, contains N-linked glycan resistant to endoglycosydase H.

It localises to the golgi apparatus. The protein localises to the trans-Golgi network membrane. It carries out the reaction adenosine 3',5'-bisphosphate + H2O = AMP + phosphate. It functions in the pathway sulfur metabolism. Its activity is regulated as follows. Strongly inhibited by lithium. Its function is as follows. Exhibits 3'-nucleotidase activity toward adenosine 3',5'-bisphosphate (PAP), namely hydrolyzes adenosine 3',5'-bisphosphate into adenosine 5'-monophosphate (AMP) and a phosphate. May play a role in the formation of skeletal elements derived through endochondral ossification, possibly by clearing adenosine 3',5'-bisphosphate produced by Golgi sulfotransferases during glycosaminoglycan sulfation. Has no activity toward 3'-phosphoadenosine 5'-phosphosulfate (PAPS) or inositol phosphate (IP) substrates including I(1)P, I(1,4)P2, I(1,3,4)P3, I(1,4,5)P3 and I(1,3,4,5)P4. This Homo sapiens (Human) protein is Golgi-resident adenosine 3',5'-bisphosphate 3'-phosphatase.